Here is a 680-residue protein sequence, read N- to C-terminus: PAN2-PAN3 deadenylation complex subunit PAN3 (680 aa).

Disordered stretches follow at residues 1-26, 51-87, and 99-120; these read MATT…RADT, HDQT…SKKT, and FTPR…TDIP. A C3H1-type zinc finger spans residues 25-54; it reads DTKDTLCRNILIYGHCRYEDAGCAFNHDQT. The segment covering 52-64 has biased composition (basic and acidic residues); sequence DQTKKSPKPDATT. Residues 62–82 carry the PABPC-interacting motif-2 (PAM-2) motif; that stretch reads ATTRKTLNVDSAPFTPAVSSQ. Positions 99–117 are enriched in low complexity; the sequence is FTPRATAATPTGTPTAQET. The segment at 256–522 is pseudokinase domain; it reads QTMTGTAALQ…TVKNLVAGIN (267 aa). Residues R311, 360–367, and 422–423 each bind ATP; these read EYYPLAET and TK. A coiled-coil region spans residues 523 to 561; the sequence is EHVMTAFDAQQRQSDMLYSELYREVENGRVLRLLMKLAT. Residues 562–680 are knob domain; sequence INERTEYDKD…VHHPSHRDRF (119 aa). Over residues 655-669 the composition is skewed to gly residues; sequence SGNGRGGPVASGSGH. The interval 655–680 is disordered; the sequence is SGNGRGGPVASGSGHGVHHPSHRDRF. The span at 670 to 680 shows a compositional bias: basic residues; the sequence is GVHHPSHRDRF.

It belongs to the protein kinase superfamily. PAN3 family. Homodimer. Forms a heterotrimer with a catalytic subunit PAN2 to form the poly(A)-nuclease (PAN) deadenylation complex. Interacts (via PAM-2 motif) with poly(A)-binding protein PAB1 (via PABC domain), conferring substrate specificity of the enzyme complex.

The protein localises to the cytoplasm. In terms of biological role, regulatory subunit of the poly(A)-nuclease (PAN) deadenylation complex, one of two cytoplasmic mRNA deadenylases involved in mRNA turnover. PAN specifically shortens poly(A) tails of RNA and the activity is stimulated by poly(A)-binding protein PAB1. PAN deadenylation is followed by rapid degradation of the shortened mRNA tails by the CCR4-NOT complex. Deadenylated mRNAs are then degraded by two alternative mechanisms, namely exosome-mediated 3'-5' exonucleolytic degradation, or deadenylation-dependent mRNA decaping and subsequent 5'-3' exonucleolytic degradation by XRN1. May also be involved in post-transcriptional maturation of mRNA poly(A) tails. PAN3 acts as a positive regulator for PAN activity, recruiting the catalytic subunit PAN2 to mRNA via its interaction with RNA and with PAB1. The chain is PAN2-PAN3 deadenylation complex subunit PAN3 from Pyricularia oryzae (strain 70-15 / ATCC MYA-4617 / FGSC 8958) (Rice blast fungus).